We begin with the raw amino-acid sequence, 1357 residues long: DNA-directed RNA polymerase subunit beta (1357 aa).

It belongs to the RNA polymerase beta chain family. In terms of assembly, the RNAP catalytic core consists of 2 alpha, 1 beta, 1 beta' and 1 omega subunit. When a sigma factor is associated with the core the holoenzyme is formed, which can initiate transcription.

The catalysed reaction is RNA(n) + a ribonucleoside 5'-triphosphate = RNA(n+1) + diphosphate. Its function is as follows. DNA-dependent RNA polymerase catalyzes the transcription of DNA into RNA using the four ribonucleoside triphosphates as substrates. In Acinetobacter baumannii (strain ATCC 17978 / DSM 105126 / CIP 53.77 / LMG 1025 / NCDC KC755 / 5377), this protein is DNA-directed RNA polymerase subunit beta.